A 171-amino-acid polypeptide reads, in one-letter code: Tetratricopeptide repeat protein 9C (171 aa).

3 TPR repeats span residues 8–41, 72–107, and 108–141; these read AQLY…LRGL, TDCY…QPDN, and AKAL…QPKD.

Belongs to the TTC9 family.

The sequence is that of Tetratricopeptide repeat protein 9C (TTC9C) from Homo sapiens (Human).